Reading from the N-terminus, the 201-residue chain is ATP-dependent Clp protease proteolytic subunit 2 (201 aa).

The Nucleophile role is filled by S98. H123 is a catalytic residue.

The protein belongs to the peptidase S14 family. As to quaternary structure, fourteen ClpP subunits assemble into 2 heptameric rings which stack back to back to give a disk-like structure with a central cavity, resembling the structure of eukaryotic proteasomes.

The protein localises to the cytoplasm. The enzyme catalyses Hydrolysis of proteins to small peptides in the presence of ATP and magnesium. alpha-casein is the usual test substrate. In the absence of ATP, only oligopeptides shorter than five residues are hydrolyzed (such as succinyl-Leu-Tyr-|-NHMec, and Leu-Tyr-Leu-|-Tyr-Trp, in which cleavage of the -Tyr-|-Leu- and -Tyr-|-Trp bonds also occurs).. In terms of biological role, cleaves peptides in various proteins in a process that requires ATP hydrolysis. Has a chymotrypsin-like activity. Plays a major role in the degradation of misfolded proteins. The polypeptide is ATP-dependent Clp protease proteolytic subunit 2 (Pseudomonas aeruginosa (strain ATCC 15692 / DSM 22644 / CIP 104116 / JCM 14847 / LMG 12228 / 1C / PRS 101 / PAO1)).